The primary structure comprises 662 residues: MTKPPLLVTCGLPYTNGPCHLGHLRTYVPADCYVRYMRRTGEEVVFVSGSDNHGTPIVVSAEEQGTTPRALSEQYHRHFDETFRRMGVSFDHFGMTDDPACHHRTQDIVQRLVDNGYVYKQVVNQAYCPKCKRFLPDRYVEGICPYCGKQARGDECDQGCGKHLEPGEIKDPVCKICGTKAEFRNQEHYFLKLSAFRDYLLPFLDNLKGTSNARNYAIGWIKDELHDWCITRTLEWGVKFPGRDDLVVYVWVDAPIGYIAFTEEWAKENGRDWKRYWCKDNRVTHFIGGDIIYHHCIFWPGLLKGAGYGEPYAVVASGMVKVDDHKFSKSRGYVVWTNDDYLDKGLPADCLRYYLLAYTSHTKELNFSWKVFGERINNEVVNILGNFLYRTLFFAHKEFGGVPGGSVDPAILAEIEKCQKSVDDQMQAYEFKGAVDTVMGLAAFGNTYIQTNAPWKLIKTDRAAAAQVIKNGIQIAKALCLLIEPVMPVKAQECWAQLGYIDRVAAHRVDEGVVIVPERQIPAPAPLFARLEEKQIAELDAVLQQRVRDADKKTEKTPMISIEDFSKVEIKTGKVLAAESIPKSSKLLKLQVDIGGETRQIVSGIAAFYKPDELVGKDVIVLTNLAPAKIFGVESNGMILAAGDAASLLTPLKPVEPGTKIR.

Residues 13–23 (PYTNGPCHLGH) carry the 'HIGH' region motif. Residues Cys144, Cys147, Cys156, and Cys160 each coordinate Zn(2+). The 'KMSKS' region motif lies at 326-330 (KFSKS). Lys329 contributes to the ATP binding site. The tRNA-binding domain maps to 564-662 (DFSKVEIKTG…KPVEPGTKIR (99 aa)).

This sequence belongs to the class-I aminoacyl-tRNA synthetase family. MetG type 1 subfamily. As to quaternary structure, homodimer. It depends on Zn(2+) as a cofactor.

The protein localises to the cytoplasm. The enzyme catalyses tRNA(Met) + L-methionine + ATP = L-methionyl-tRNA(Met) + AMP + diphosphate. Its function is as follows. Is required not only for elongation of protein synthesis but also for the initiation of all mRNA translation through initiator tRNA(fMet) aminoacylation. The protein is Methionine--tRNA ligase of Methanoregula boonei (strain DSM 21154 / JCM 14090 / 6A8).